A 281-amino-acid polypeptide reads, in one-letter code: 4-hydroxy-3-methylbut-2-enyl diphosphate reductase (281 aa).

Cys12 lines the [4Fe-4S] cluster pocket. (2E)-4-hydroxy-3-methylbut-2-enyl diphosphate is bound by residues His41 and His74. Dimethylallyl diphosphate contacts are provided by His41 and His74. His41 and His74 together coordinate isopentenyl diphosphate. Cys96 is a binding site for [4Fe-4S] cluster. His124 lines the (2E)-4-hydroxy-3-methylbut-2-enyl diphosphate pocket. Residue His124 coordinates dimethylallyl diphosphate. His124 lines the isopentenyl diphosphate pocket. The Proton donor role is filled by Glu126. Residue Thr164 coordinates (2E)-4-hydroxy-3-methylbut-2-enyl diphosphate. Cys193 is a [4Fe-4S] cluster binding site. 3 residues coordinate (2E)-4-hydroxy-3-methylbut-2-enyl diphosphate: Ser221, Asn223, and Ser265. Positions 221, 223, and 265 each coordinate dimethylallyl diphosphate. The isopentenyl diphosphate site is built by Ser221, Asn223, and Ser265.

The protein belongs to the IspH family. [4Fe-4S] cluster is required as a cofactor.

The enzyme catalyses isopentenyl diphosphate + 2 oxidized [2Fe-2S]-[ferredoxin] + H2O = (2E)-4-hydroxy-3-methylbut-2-enyl diphosphate + 2 reduced [2Fe-2S]-[ferredoxin] + 2 H(+). It carries out the reaction dimethylallyl diphosphate + 2 oxidized [2Fe-2S]-[ferredoxin] + H2O = (2E)-4-hydroxy-3-methylbut-2-enyl diphosphate + 2 reduced [2Fe-2S]-[ferredoxin] + 2 H(+). It functions in the pathway isoprenoid biosynthesis; dimethylallyl diphosphate biosynthesis; dimethylallyl diphosphate from (2E)-4-hydroxy-3-methylbutenyl diphosphate: step 1/1. It participates in isoprenoid biosynthesis; isopentenyl diphosphate biosynthesis via DXP pathway; isopentenyl diphosphate from 1-deoxy-D-xylulose 5-phosphate: step 6/6. Its function is as follows. Catalyzes the conversion of 1-hydroxy-2-methyl-2-(E)-butenyl 4-diphosphate (HMBPP) into a mixture of isopentenyl diphosphate (IPP) and dimethylallyl diphosphate (DMAPP). Acts in the terminal step of the DOXP/MEP pathway for isoprenoid precursor biosynthesis. The protein is 4-hydroxy-3-methylbut-2-enyl diphosphate reductase of Nitratidesulfovibrio vulgaris (strain DSM 19637 / Miyazaki F) (Desulfovibrio vulgaris).